Here is a 1072-residue protein sequence, read N- to C-terminus: Carbamoyl phosphate synthase large chain (1072 aa).

Positions 1-401 are carboxyphosphate synthetic domain; that stretch reads MPKRLDINTI…SLLKAVRSLE (401 aa). ATP contacts are provided by R129, R169, G175, G176, K208, I210, E215, G241, V242, H243, Q284, and E298. The ATP-grasp 1 domain occupies 133–327; it reads RTLMQDLNEP…IAKLAAKIAV (195 aa). 3 residues coordinate Mg(2+): Q284, E298, and N300. Q284, E298, and N300 together coordinate Mn(2+). Residues 402–546 form an oligomerization domain region; it reads LGIYHLELDH…YSTYAEENES (145 aa). The tract at residues 547–929 is carbamoyl phosphate synthetic domain; the sequence is IVTDRKSVVV…ALYKGLVASG (383 aa). One can recognise an ATP-grasp 2 domain in the interval 671 to 861; sequence EAALTKLGIP…MANVATKVIL (191 aa). The ATP site is built by R707, R746, E752, G777, V778, H779, S780, Q820, and E832. 3 residues coordinate Mg(2+): Q820, E832, and N834. 3 residues coordinate Mn(2+): Q820, E832, and N834. An MGS-like domain is found at 930 to 1072; it reads INIPTHGSVI…QTKRHEVVHA (143 aa). The allosteric domain stretch occupies residues 930–1072; the sequence is INIPTHGSVI…QTKRHEVVHA (143 aa).

It belongs to the CarB family. In terms of assembly, composed of two chains; the small (or glutamine) chain promotes the hydrolysis of glutamine to ammonia, which is used by the large (or ammonia) chain to synthesize carbamoyl phosphate. Tetramer of heterodimers (alpha,beta)4. It depends on Mg(2+) as a cofactor. Requires Mn(2+) as cofactor.

The catalysed reaction is hydrogencarbonate + L-glutamine + 2 ATP + H2O = carbamoyl phosphate + L-glutamate + 2 ADP + phosphate + 2 H(+). The enzyme catalyses hydrogencarbonate + NH4(+) + 2 ATP = carbamoyl phosphate + 2 ADP + phosphate + 2 H(+). The protein operates within amino-acid biosynthesis; L-arginine biosynthesis; carbamoyl phosphate from bicarbonate: step 1/1. It participates in pyrimidine metabolism; UMP biosynthesis via de novo pathway; (S)-dihydroorotate from bicarbonate: step 1/3. Functionally, large subunit of the glutamine-dependent carbamoyl phosphate synthetase (CPSase). CPSase catalyzes the formation of carbamoyl phosphate from the ammonia moiety of glutamine, carbonate, and phosphate donated by ATP, constituting the first step of 2 biosynthetic pathways, one leading to arginine and/or urea and the other to pyrimidine nucleotides. The large subunit (synthetase) binds the substrates ammonia (free or transferred from glutamine from the small subunit), hydrogencarbonate and ATP and carries out an ATP-coupled ligase reaction, activating hydrogencarbonate by forming carboxy phosphate which reacts with ammonia to form carbamoyl phosphate. This is Carbamoyl phosphate synthase large chain from Bacillus cereus (strain ATCC 10987 / NRS 248).